We begin with the raw amino-acid sequence, 207 residues long: Uracil phosphoribosyltransferase (207 aa).

Residues Arg77, Arg102, and 129–137 contribute to the 5-phospho-alpha-D-ribose 1-diphosphate site; that span reads DPMLATGGS. Uracil contacts are provided by residues Ile192 and 197 to 199; that span reads GDA. Asp198 contacts 5-phospho-alpha-D-ribose 1-diphosphate.

This sequence belongs to the UPRTase family. Mg(2+) is required as a cofactor.

The enzyme catalyses UMP + diphosphate = 5-phospho-alpha-D-ribose 1-diphosphate + uracil. Its pathway is pyrimidine metabolism; UMP biosynthesis via salvage pathway; UMP from uracil: step 1/1. Allosterically activated by GTP. Catalyzes the conversion of uracil and 5-phospho-alpha-D-ribose 1-diphosphate (PRPP) to UMP and diphosphate. This chain is Uracil phosphoribosyltransferase, found in Dictyoglomus turgidum (strain DSM 6724 / Z-1310).